The chain runs to 206 residues: Peptidyl-tRNA hydrolase (206 aa).

Residue Tyr-14 participates in tRNA binding. His-19 serves as the catalytic Proton acceptor. 2 residues coordinate tRNA: Tyr-64 and Asn-66. A disordered region spans residues 182 to 206; that stretch reads FNQKNKKKKEKEQPEAATDQLLENK.

Belongs to the PTH family. Monomer.

It localises to the cytoplasm. It catalyses the reaction an N-acyl-L-alpha-aminoacyl-tRNA + H2O = an N-acyl-L-amino acid + a tRNA + H(+). Functionally, hydrolyzes ribosome-free peptidyl-tRNAs (with 1 or more amino acids incorporated), which drop off the ribosome during protein synthesis, or as a result of ribosome stalling. Catalyzes the release of premature peptidyl moieties from peptidyl-tRNA molecules trapped in stalled 50S ribosomal subunits, and thus maintains levels of free tRNAs and 50S ribosomes. This is Peptidyl-tRNA hydrolase from Desulforamulus reducens (strain ATCC BAA-1160 / DSM 100696 / MI-1) (Desulfotomaculum reducens).